The primary structure comprises 131 residues: Small ribosomal subunit protein bS6 (131 aa).

The interval 97–131 (TEASPMVKAKDERRRDVAEDLDEEEVDDVAEDSEE) is disordered. The span at 104–114 (KAKDERRRDVA) shows a compositional bias: basic and acidic residues. The span at 115-131 (EDLDEEEVDDVAEDSEE) shows a compositional bias: acidic residues.

The protein belongs to the bacterial ribosomal protein bS6 family.

In terms of biological role, binds together with bS18 to 16S ribosomal RNA. This Proteus mirabilis (strain HI4320) protein is Small ribosomal subunit protein bS6.